The primary structure comprises 153 residues: Prostaglandin E synthase (153 aa).

Residues 1–13 (MPPSGLELMNGQV) are Lumenal-facing. The helical transmembrane segment at 14–42 (LPAFLLCSALLVIKMYVVAVITGQVRLRK) threads the bilayer. Arg-39 provides a ligand contact to glutathione. Residues 43–61 (KAFANPEDAQRHGGLQYCR) lie on the Cytoplasmic side of the membrane. Residues 62 to 91 (NDPDVERCLRAHRNDMETIYPFLFLGFVYS) traverse the membrane as a helical segment. Residue 74-78 (RNDME) participates in glutathione binding. The Lumenal portion of the chain corresponds to 92-96 (FLGPN). Residues 97–120 (PFVARMHFLVFFLGRMVHTVAYLG) traverse the membrane as a helical segment. His-114 and Tyr-118 together coordinate glutathione. Over 121–124 (KLRA) the chain is Cytoplasmic. A helical transmembrane segment spans residues 125 to 153 (PTRSLAYTLAQLPCASMALQIVWEAARHL). 127 to 131 (RSLAY) is a binding site for glutathione.

Belongs to the MAPEG family. Homotrimer. The cofactor is glutathione.

Its subcellular location is the membrane. The protein resides in the cytoplasm. It is found in the perinuclear region. The catalysed reaction is prostaglandin H2 = prostaglandin E2. It catalyses the reaction 2-glyceryl-prostaglandin H2 = 2-glyceryl-prostaglandin E2. The enzyme catalyses prostaglandin G2 = (15S)-15-hydroperoxy-prostaglandin E2. It carries out the reaction 1-chloro-2,4-dinitrobenzene + glutathione = 2,4-dinitrophenyl-S-glutathione + chloride + H(+). The catalysed reaction is (5S)-hydroperoxy-(6E,8Z,11Z,14Z)-eicosatetraenoate + 2 glutathione = (5S)-hydroxy-(6E,8Z,11Z,14Z)-eicosatetraenoate + glutathione disulfide + H2O. It functions in the pathway lipid metabolism; prostaglandin biosynthesis. In terms of biological role, terminal enzyme of the cyclooxygenase (COX)-2-mediated prostaglandin E2 (PGE2) biosynthetic pathway. Catalyzes the glutathione-dependent oxidoreduction of prostaglandin endoperoxide H2 (PGH2) to prostaglandin E2 (PGE2) in response to inflammatory stimuli. Plays a key role in inflammation response, fever and pain. Also catalyzes the oxidoreduction of endocannabinoids into prostaglandin glycerol esters and PGG2 into 15-hydroperoxy-PGE2. In addition, displays low glutathione transferase and glutathione-dependent peroxidase activities, toward 1-chloro-2,4-dinitrobenzene and 5-hydroperoxyicosatetraenoic acid (5-HPETE), respectively. The sequence is that of Prostaglandin E synthase (PTGES) from Bos taurus (Bovine).